A 484-amino-acid polypeptide reads, in one-letter code: Glycogen synthase (484 aa).

ADP-alpha-D-glucose is bound at residue Lys-15.

The protein belongs to the glycosyltransferase 1 family. Bacterial/plant glycogen synthase subfamily.

It carries out the reaction [(1-&gt;4)-alpha-D-glucosyl](n) + ADP-alpha-D-glucose = [(1-&gt;4)-alpha-D-glucosyl](n+1) + ADP + H(+). Its pathway is glycan biosynthesis; glycogen biosynthesis. Functionally, synthesizes alpha-1,4-glucan chains using ADP-glucose. This is Glycogen synthase from Syntrophotalea carbinolica (strain DSM 2380 / NBRC 103641 / GraBd1) (Pelobacter carbinolicus).